Here is a 199-residue protein sequence, read N- to C-terminus: Dephospho-CoA kinase (199 aa).

The region spanning 3–199 is the DPCK domain; it reads ILGLTGSIGM…ATAKMPQRRA (197 aa). 11–16 contacts ATP; the sequence is GMGKST.

It belongs to the CoaE family.

Its subcellular location is the cytoplasm. It catalyses the reaction 3'-dephospho-CoA + ATP = ADP + CoA + H(+). It participates in cofactor biosynthesis; coenzyme A biosynthesis; CoA from (R)-pantothenate: step 5/5. Functionally, catalyzes the phosphorylation of the 3'-hydroxyl group of dephosphocoenzyme A to form coenzyme A. This Rhodopseudomonas palustris (strain BisB18) protein is Dephospho-CoA kinase.